Here is a 455-residue protein sequence, read N- to C-terminus: MKLLVVGASYRTAPVAALERLTVAPADLSRVLTRLVAQPYVSEAVLVSTCNRVEVYAVVSGFHGGLGDICAVLAESTGCQPAALADHLYVHFDAAAVNHVFRVAVGLDSMVVGEAQILGQLRDAYHWASEAETVGRLLHELMQQALRVGKRAHSETGIDRAGQSVVTAALGLATELLHSDLACRPALVVGAGAMGSLGVATLARLGAGPVSVTNRGVDRAIRLAESYGATAVPIADLTATLSTVDIVVAATAAPEAVLTRAVVTQALAGRNPSRGPLVLLDLAVPRDVEPGVADLPGVQVIDIDRMAALVADGPVAADAAAVEQIVAAEVDTFLTWLRGADVAPTVAALRGRADDVVAAELGRLVHRRPDLTDEQRADVARTVHRVVQRLLHQPTVRVRQLAAEPGGDQYTALLRELFDLEVPQTSAVGTVPDVVVPDVDPQLGGDAEAPPTGGE.

Residues 49 to 52, Ser-109, 114 to 116, and Gln-120 contribute to the substrate site; these read TCNR and EAQ. Cys-50 serves as the catalytic Nucleophile. Residue 190 to 195 participates in NADP(+) binding; sequence GAGAMG.

The protein belongs to the glutamyl-tRNA reductase family. As to quaternary structure, homodimer.

It carries out the reaction (S)-4-amino-5-oxopentanoate + tRNA(Glu) + NADP(+) = L-glutamyl-tRNA(Glu) + NADPH + H(+). Its pathway is porphyrin-containing compound metabolism; protoporphyrin-IX biosynthesis; 5-aminolevulinate from L-glutamyl-tRNA(Glu): step 1/2. Its function is as follows. Catalyzes the NADPH-dependent reduction of glutamyl-tRNA(Glu) to glutamate 1-semialdehyde (GSA). The polypeptide is Glutamyl-tRNA reductase (Salinispora tropica (strain ATCC BAA-916 / DSM 44818 / JCM 13857 / NBRC 105044 / CNB-440)).